The chain runs to 215 residues: UPF0319 protein VV2_0960 (215 aa).

The signal sequence occupies residues 1-21; the sequence is MNIIKPLTCILAMSISGLATA.

It belongs to the UPF0319 family.

This is UPF0319 protein VV2_0960 from Vibrio vulnificus (strain CMCP6).